Here is a 352-residue protein sequence, read N- to C-terminus: MSSSEKVSVGIVGASGYGGMQLVRLLSDHPQVELTYLGGNSSAGKPYAELYPHVGHRIKMIVEPIDLDVIASRCQVVFLGLPNGLACDLAPQLIERGCKVLDLSADYRFKDLDTYQAWYKTERTDQDTNAIAVYGLPELYRDDIRRAQLVGCPGCYVTASLLALAPLFKQGLIQPETAIIDAKSGTSGGGRQGKINLLLAEADASLGAYGVASHRHTPEIEQICSKLASQDIRVQFTPHLIPMPRGILATVYATLRDPGLVRDDLLTIYSAFYRAAPCVEVLPNGVYPQTKWACGTNLCYLGIEVDHRTGRVIVMSAIDNLLKGQSGQAVQCMNIMLGWEETAGLPQLAFYP.

The active site involves cysteine 155.

The protein belongs to the NAGSA dehydrogenase family. Type 1 subfamily.

It localises to the cytoplasm. It carries out the reaction N-acetyl-L-glutamate 5-semialdehyde + phosphate + NADP(+) = N-acetyl-L-glutamyl 5-phosphate + NADPH + H(+). The protein operates within amino-acid biosynthesis; L-arginine biosynthesis; N(2)-acetyl-L-ornithine from L-glutamate: step 3/4. In terms of biological role, catalyzes the NADPH-dependent reduction of N-acetyl-5-glutamyl phosphate to yield N-acetyl-L-glutamate 5-semialdehyde. This Picosynechococcus sp. (strain ATCC 27264 / PCC 7002 / PR-6) (Agmenellum quadruplicatum) protein is N-acetyl-gamma-glutamyl-phosphate reductase.